The primary structure comprises 93 residues: MTEIKVPDLEQKALALLQADADKIYKLIDVQMENLTMPQCPLYEEVLDTQMFGLSREVEYAVRLGLISDDIGREIMGSLERKLAHLHELFNQR.

This sequence belongs to the UPF0358 family.

The polypeptide is UPF0358 protein BBR47_22520 (Brevibacillus brevis (strain 47 / JCM 6285 / NBRC 100599)).